Here is a 1806-residue protein sequence, read N- to C-terminus: uncharacterized protein (1806 aa).

Disordered regions lie at residues 38-131 (EASG…SPLF) and 158-282 (KAVS…KPRP). Low complexity predominate over residues 51-70 (KSPLRSPARLLPLPRLAPKP). A phosphoserine mark is found at S52, S56, S79, S87, S88, S92, and S128. Residues 82–100 (PSLRPSSTGPSPSGGLSEE) show a composition bias toward low complexity. The span at 226–236 (DTARPLVEPRP) shows a compositional bias: basic and acidic residues. Phosphoserine occurs at positions 244 and 284. Disordered regions lie at residues 299 to 320 (RKVA…ERPR), 355 to 431 (KEKM…GGEW), 456 to 604 (SESP…PEDD), and 627 to 696 (QSGR…ELRP). S366 carries the phosphoserine modification. Phosphothreonine is present on T378. Phosphoserine is present on S384. The segment covering 386–400 (WEEKAKLDPEPEKAA) has biased composition (basic and acidic residues). The residue at position 404 (S404) is a Phosphoserine. Residues 412–422 (ELAEVKSRVAD) are compositionally biased toward basic and acidic residues. Low complexity predominate over residues 456–470 (SESPLATPASPSAAP). A phosphoserine mark is found at S458 and S508. The segment covering 514–523 (LFSSSASSNE) has biased composition (polar residues). Basic and acidic residues-rich tracts occupy residues 524–549 (VKYE…EGHS) and 564–573 (TLRDKSRQTE). The residue at position 600 (T600) is a Phosphothreonine. Composition is skewed to basic and acidic residues over residues 641-652 (AHARVSEPRPRP) and 661-674 (DPPD…ENSR). Position 749 is a phosphoserine (S749). Disordered stretches follow at residues 860–901 (QHEG…QART), 969–989 (SPHV…ALRK), and 1000–1019 (QEVN…KQGS). Residues 889–900 (RATNGPSDSQAR) show a composition bias toward polar residues. S969 and S981 each carry phosphoserine. Residues 969-978 (SPHVGHRRTD) show a composition bias toward basic and acidic residues. Residue T1059 is modified to Phosphothreonine. 2 positions are modified to phosphoserine: S1063 and S1154. Residues 1134–1178 (RGSEDGPRPQSNWKESANKMSPSGGAPQTTPTLRSRPKDLPVRRK) are disordered. The span at 1142 to 1166 (PQSNWKESANKMSPSGGAPQTTPTL) shows a compositional bias: polar residues. At T1163 the chain carries Phosphothreonine. Residues 1169–1178 (RPKDLPVRRK) are compositionally biased toward basic and acidic residues. 2 positions are modified to phosphothreonine: T1179 and T1185. Disordered stretches follow at residues 1216–1265 (PGEA…PASS) and 1291–1493 (KSSP…VASV). S1224 carries the phosphoserine modification. A Phosphothreonine modification is found at T1226. 2 stretches are compositionally biased toward basic and acidic residues: residues 1244–1254 (EQRRRSLKEMP) and 1317–1331 (DPRK…DRKA). S1366 is modified (phosphoserine). Basic and acidic residues-rich tracts occupy residues 1393-1410 (DHPR…RAYS) and 1426-1437 (HEARERRREQPK). A Phosphoserine modification is found at S1441. Basic and acidic residues predominate over residues 1462-1483 (DSHKVLPRDLEKEDAPQEKERP). 2 positions are modified to phosphoserine: S1488 and S1506. Disordered stretches follow at residues 1512 to 1627 (QLKQ…KRVD) and 1642 to 1806 (ALKT…ENQV). The segment covering 1522 to 1531 (TEPKDTDTLV) has biased composition (basic and acidic residues). Positions 1537–1568 (QYGTWTEQCQSGESLATESPDSSATSTRKQPP) are enriched in polar residues. 2 positions are modified to phosphoserine: S1555 and S1662. Residues 1649 to 1666 (LSKRSRRRAPISHSLRRS) show a composition bias toward basic residues. Composition is skewed to basic and acidic residues over residues 1667–1677 (RFSESESRSPL) and 1689–1714 (DSTE…ERTP). 4 positions are modified to phosphoserine: S1701, S1757, S1760, and S1786. The segment covering 1753–1764 (PQPKSPKSPFQP) has biased composition (low complexity).

This is an uncharacterized protein from Homo sapiens (Human).